The sequence spans 690 residues: MSRQILVTSALPYANGSIHLGHLVEYIQTDIWVRFQKMRGTNCRYMCADDTHGTAIMLRAEKEAITPEALIQRVWAEHTRDFAGFHIGFDHYYSTHSDENREHASKIYLALKDAGLIEVKTIAQLYDPVKNLFLPDRFIKGECPKCGAADQYGDNCEVCGATYSPTELKNPVSAVSGATPVHKDSEHYFFKLGDCEAFLREWTTSGTLQAEAANKMQEWFAAGLNNWDISRDAPYFGFEIPDAPGKYFYVWLDAPVGYMASFARYAKDHGLDFDAWWGKDSKTELVHFIGKDILYFHALFWPAMLKFSGHRLPTAVYAHGFLTVNGQKMSKSRGTFITASSYLDQGLNPEWLRYYYAAKLNGTMEDIDLNLDDFVARVNSDLVGKFINIASRTAGFIHKKFDGKLADGVGNIELIGEFQAAADTIAAHYEARDYAKALREIMALADRANQYVADEKPWELAKDDAAVYRLHEVCTVALNLFRLLTLYLKPVLPKLAGEVERFLDIPALTWKDARSLFIRQAINAYSHLMTRIDPKSIEAMVDANKQNLEPTPAPAPARHAEAQAHAAQAVEAPKTETISIDDFAKVDLRIARIANAEHVEGADKLLRLTLDVGELGPRQVFAGIKSAYAPEALVGRLTVMVANLAPRKMKFGMSEGMVLAASNPDGHKDDVPGLFILSPDSGAEPGMKVK.

The short motif at 12–22 (PYANGSIHLGH) is the 'HIGH' region element. Residues Cys-143, Cys-146, Cys-156, and Cys-159 each coordinate Zn(2+). The 'KMSKS' region signature appears at 328-332 (KMSKS). Lys-331 contributes to the ATP binding site. The tRNA-binding domain maps to 582 to 690 (DFAKVDLRIA…SGAEPGMKVK (109 aa)).

This sequence belongs to the class-I aminoacyl-tRNA synthetase family. MetG type 1 subfamily. In terms of assembly, homodimer. It depends on Zn(2+) as a cofactor.

The protein resides in the cytoplasm. It carries out the reaction tRNA(Met) + L-methionine + ATP = L-methionyl-tRNA(Met) + AMP + diphosphate. Is required not only for elongation of protein synthesis but also for the initiation of all mRNA translation through initiator tRNA(fMet) aminoacylation. In Thiobacillus denitrificans (strain ATCC 25259 / T1), this protein is Methionine--tRNA ligase.